We begin with the raw amino-acid sequence, 776 residues long: Probable exo-1,4-beta-xylosidase bxlB (776 aa).

Positions 1–23 are cleaved as a signal peptide; sequence MVHLSPLLRPLAAFSFFTSLAST. Residues asparagine 65 and asparagine 105 are each glycosylated (N-linked (GlcNAc...) asparagine). Aspartate 291 is an active-site residue. Residues asparagine 343, asparagine 410, asparagine 421, asparagine 462, asparagine 623, and asparagine 766 are each glycosylated (N-linked (GlcNAc...) asparagine).

This sequence belongs to the glycosyl hydrolase 3 family.

Its subcellular location is the secreted. The enzyme catalyses Hydrolysis of (1-&gt;4)-beta-D-xylans, to remove successive D-xylose residues from the non-reducing termini.. Its pathway is glycan degradation; xylan degradation. Functionally, xylan 1,4-beta-xylosidase involved in the hydrolysis of xylan, a major structural heterogeneous polysaccharide found in plant biomass representing the second most abundant polysaccharide in the biosphere, after cellulose. This chain is Probable exo-1,4-beta-xylosidase bxlB (bxlB), found in Aspergillus flavus (strain ATCC 200026 / FGSC A1120 / IAM 13836 / NRRL 3357 / JCM 12722 / SRRC 167).